The primary structure comprises 930 residues: Protein translocase subunit SecA (930 aa).

ATP contacts are provided by residues Q83, 101-105 (GEGKT), and D491.

The protein belongs to the SecA family. In terms of assembly, monomer and homodimer. Part of the essential Sec protein translocation apparatus which comprises SecA, SecYEG and auxiliary proteins SecDF. Other proteins may also be involved.

It localises to the cell inner membrane. The protein localises to the cellular thylakoid membrane. Its subcellular location is the cytoplasm. It carries out the reaction ATP + H2O + cellular proteinSide 1 = ADP + phosphate + cellular proteinSide 2.. In terms of biological role, part of the Sec protein translocase complex. Interacts with the SecYEG preprotein conducting channel. Has a central role in coupling the hydrolysis of ATP to the transfer of proteins into and across the cell membrane, serving as an ATP-driven molecular motor driving the stepwise translocation of polypeptide chains across the membrane. Functionally, probably participates in protein translocation into and across both the cytoplasmic and thylakoid membranes in cyanobacterial cells. The polypeptide is Protein translocase subunit SecA (Trichormus variabilis (strain ATCC 29413 / PCC 7937) (Anabaena variabilis)).